Consider the following 250-residue polypeptide: Small ribosomal subunit protein uS3 (250 aa).

The KH type-2 domain occupies 39–107 (VREFLTKKLK…PAQVSINEID (69 aa)). The interval 215 to 250 (MNPAPAEERPAKRGRGRGEGQERRGRRGDRAADKGE) is disordered. A compositionally biased stretch (basic and acidic residues) spans 220-250 (AEERPAKRGRGRGEGQERRGRRGDRAADKGE).

It belongs to the universal ribosomal protein uS3 family. In terms of assembly, part of the 30S ribosomal subunit. Forms a tight complex with proteins S10 and S14.

Functionally, binds the lower part of the 30S subunit head. Binds mRNA in the 70S ribosome, positioning it for translation. The sequence is that of Small ribosomal subunit protein uS3 from Acinetobacter baumannii (strain AB307-0294).